The sequence spans 308 residues: MNHFLDIHKTDTAELRQMMDSAHAMKAARKGRPKGQLDEDQPLAGRMVALIFEKPSTRTRVSFDVGVRQMGGQTMVLSGKEMQLGHGETIADTARVLSRYVDLIMIRTFEEATLLEMAEHATVPVINGLTNRTHPCQIMADVMTYEEHRGPIAGRKVVWAGDGNNVCASFLHAAGQFGFDFTFTGPSTLDPEAEFVGYAREKGRRVSIERDPAKAVAGADLVVTDTWVSMHDPQSARERRHNQLRPYQVNETLMAQAKPDALFMHCLPAHRDDEATSAVMDGPHSVIFDEAENRLHAQKAIMRWCLGL.

Residues 56-59, Q83, R107, and 134-137 contribute to the carbamoyl phosphate site; these read STRT and HPCQ. L-ornithine-binding positions include N165, D225, and 229-230; that span reads SM. Carbamoyl phosphate is bound by residues 266 to 267 and R294; that span reads CL.

The protein belongs to the aspartate/ornithine carbamoyltransferase superfamily. OTCase family.

It localises to the cytoplasm. It catalyses the reaction carbamoyl phosphate + L-ornithine = L-citrulline + phosphate + H(+). Its pathway is amino-acid biosynthesis; L-arginine biosynthesis; L-arginine from L-ornithine and carbamoyl phosphate: step 1/3. Its function is as follows. Reversibly catalyzes the transfer of the carbamoyl group from carbamoyl phosphate (CP) to the N(epsilon) atom of ornithine (ORN) to produce L-citrulline. In Cereibacter sphaeroides (strain ATCC 17023 / DSM 158 / JCM 6121 / CCUG 31486 / LMG 2827 / NBRC 12203 / NCIMB 8253 / ATH 2.4.1.) (Rhodobacter sphaeroides), this protein is Ornithine carbamoyltransferase.